Here is an 88-residue protein sequence, read N- to C-terminus: uncharacterized protein (88 aa).

This sequence to E.coli YihD.

This is an uncharacterized protein from Haemophilus influenzae (strain ATCC 51907 / DSM 11121 / KW20 / Rd).